The sequence spans 237 residues: Probable septum site-determining protein MinC (237 aa).

The protein belongs to the MinC family. As to quaternary structure, interacts with MinD and FtsZ.

In terms of biological role, cell division inhibitor that blocks the formation of polar Z ring septums. Rapidly oscillates between the poles of the cell to destabilize FtsZ filaments that have formed before they mature into polar Z rings. Prevents FtsZ polymerization. This Buchnera aphidicola subsp. Acyrthosiphon pisum (strain 5A) protein is Probable septum site-determining protein MinC.